We begin with the raw amino-acid sequence, 144 residues long: uncharacterized protein (144 aa).

Residues 72-90 (VAIGTSLIVGAGVAMEVSV) form a helical membrane-spanning segment.

The protein to yeast YCL21w.

The protein localises to the membrane. This is an uncharacterized protein from Saccharomyces cerevisiae (strain ATCC 204508 / S288c) (Baker's yeast).